We begin with the raw amino-acid sequence, 364 residues long: Geranylgeranyl pyrophosphate synthase janG (364 aa).

Positions 83, 86, and 115 each coordinate isopentenyl diphosphate. 2 residues coordinate Mg(2+): Asp122 and Asp126. A dimethylallyl diphosphate-binding site is contributed by Arg131. Arg132 lines the isopentenyl diphosphate pocket. 3 residues coordinate dimethylallyl diphosphate: Lys209, Thr210, and Gln243. A Mg(2+)-binding site is contributed by Asp246. Residues Asn250, Lys260, and Lys270 each coordinate dimethylallyl diphosphate.

It belongs to the FPP/GGPP synthase family. Mg(2+) serves as cofactor.

It carries out the reaction isopentenyl diphosphate + dimethylallyl diphosphate = (2E)-geranyl diphosphate + diphosphate. The enzyme catalyses isopentenyl diphosphate + (2E)-geranyl diphosphate = (2E,6E)-farnesyl diphosphate + diphosphate. The catalysed reaction is isopentenyl diphosphate + (2E,6E)-farnesyl diphosphate = (2E,6E,10E)-geranylgeranyl diphosphate + diphosphate. It participates in secondary metabolite biosynthesis. Geranylgeranyl pyrophosphate synthase; part of the gene cluster that mediates the biosynthesis of the indole diterpenes janthitremanes such as shearinine K or shearinine A. The geranylgeranyl diphosphate (GGPP) synthase janG catalyzes the first step in janthitremane biosynthesis via conversion of farnesyl pyrophosphate and isopentyl pyrophosphate into geranylgeranyl pyrophosphate (GGPP). Condensation of indole-3-glycerol phosphate with GGPP by the prenyl transferase janC then forms 3-geranylgeranylindole (3-GGI). Epoxidation by the FAD-dependent monooxygenase janM leads to a epoxidized-GGI that is substrate of the terpene cyclase janB for cyclization to yield paspaline. Paspaline is subsequently converted to 13-desoxypaspaline by the cytochrome P450 monooxygenase janP, via beta-PC-M6 in a series of alpha-face oxidations. The cytochrome P450 monooxygenase janQ is proposed to carry out sequential beta-face oxidation steps at C-7 and C-13 of 13-desoxypaspaline to form paspalicine and paspalinine respectively. The indole diterpene prenyltransferase janD may then convert paspalinine into shearinine K which is substrate of janO and/or additional enzymes for oxidation and cyclization to generate shearinine A. The sequence is that of Geranylgeranyl pyrophosphate synthase janG from Penicillium janthinellum (Penicillium vitale).